Here is a 263-residue protein sequence, read N- to C-terminus: HTH-type transcriptional repressor NanR (263 aa).

The interval 1 to 24 (MSPMNAFDSQTEDSSPAIGRNLRS) is disordered. The HTH gntR-type domain occupies 30–98 (KKLSEMVEEE…NGERARVSRP (69 aa)). The H-T-H motif DNA-binding region spans 58–77 (ERELMAFFNVGRPSVREALA).

The protein belongs to the NanR family.

In terms of biological role, transcriptional repressor that controls expression of the genes required for the catabolism of sialic acids. In Escherichia coli O127:H6 (strain E2348/69 / EPEC), this protein is HTH-type transcriptional repressor NanR.